A 242-amino-acid chain; its full sequence is Ethanolamine ammonia-lyase small subunit (242 aa).

Residues Val-155 and Glu-176 each contribute to the adenosylcob(III)alamin site.

It belongs to the EutC family. In terms of assembly, the basic unit is a heterodimer which dimerizes to form tetramers. The heterotetramers trimerize; 6 large subunits form a core ring with 6 small subunits projecting outwards. Requires adenosylcob(III)alamin as cofactor.

The protein resides in the bacterial microcompartment. It carries out the reaction ethanolamine = acetaldehyde + NH4(+). The protein operates within amine and polyamine degradation; ethanolamine degradation. In terms of biological role, catalyzes the deamination of various vicinal amino-alcohols to oxo compounds. Allows this organism to utilize ethanolamine as the sole source of nitrogen and carbon in the presence of external vitamin B12. In Clostridium acetobutylicum (strain ATCC 824 / DSM 792 / JCM 1419 / IAM 19013 / LMG 5710 / NBRC 13948 / NRRL B-527 / VKM B-1787 / 2291 / W), this protein is Ethanolamine ammonia-lyase small subunit.